We begin with the raw amino-acid sequence, 196 residues long: Na(+)-translocating ferredoxin:NAD(+) oxidoreductase complex subunit E (196 aa).

A run of 5 helical transmembrane segments spans residues 38–58 (MGMG…ISAL), 68–88 (IPAF…LMKA), 92–112 (ALDA…IILA), 127–147 (FADA…LGSI), and 169–189 (VLLM…IGLI).

The protein belongs to the NqrDE/RnfAE family. In terms of assembly, the complex is composed of six subunits: RnfA, RnfB, RnfC, RnfD, RnfE and RnfG.

The protein resides in the cell membrane. It catalyses the reaction 2 reduced [2Fe-2S]-[ferredoxin] + Na(+)(in) + NAD(+) + H(+) = 2 oxidized [2Fe-2S]-[ferredoxin] + Na(+)(out) + NADH. In terms of biological role, part of a membrane-bound complex that couples electron transfer with translocation of ions across the membrane. Couples electron transfer from reduced ferredoxin to NAD(+) with electrogenic movement of Na(+) out of the cell. Involved in caffeate respiration. The polypeptide is Na(+)-translocating ferredoxin:NAD(+) oxidoreductase complex subunit E (Acetobacterium woodii (strain ATCC 29683 / DSM 1030 / JCM 2381 / KCTC 1655 / WB1)).